Consider the following 178-residue polypeptide: uncharacterized protein (178 aa).

An N-acetyltransferase domain is found at 9-173; the sequence is LTLRKMELED…IDVYMFSLLK (165 aa).

This is an uncharacterized protein from Bacillus licheniformis.